A 152-amino-acid chain; its full sequence is Large ribosomal subunit protein uL13 (152 aa).

The interval 133–152 is disordered; sequence EHPHQAQKPQPLTINTIPGA. The segment covering 139 to 152 has biased composition (polar residues); that stretch reads QKPQPLTINTIPGA.

This sequence belongs to the universal ribosomal protein uL13 family. As to quaternary structure, part of the 50S ribosomal subunit.

In terms of biological role, this protein is one of the early assembly proteins of the 50S ribosomal subunit, although it is not seen to bind rRNA by itself. It is important during the early stages of 50S assembly. This Thermosynechococcus vestitus (strain NIES-2133 / IAM M-273 / BP-1) protein is Large ribosomal subunit protein uL13.